A 429-amino-acid polypeptide reads, in one-letter code: Phosphoribosylamine--glycine ligase (429 aa).

The region spanning 109–316 (KDFLARHQIP…LVELCLAAID (208 aa)) is the ATP-grasp domain. Residue 135-196 (VREQGAPIVV…EEFLDGEEAS (62 aa)) participates in ATP binding. Residues 212-234 (SQDHKRVGDKDTGPNTGGMGAYS) are disordered. Residues 213-223 (QDHKRVGDKDT) are compositionally biased toward basic and acidic residues. Mg(2+)-binding residues include glutamate 286 and asparagine 288.

This sequence belongs to the GARS family. Requires Mg(2+) as cofactor. It depends on Mn(2+) as a cofactor.

The catalysed reaction is 5-phospho-beta-D-ribosylamine + glycine + ATP = N(1)-(5-phospho-beta-D-ribosyl)glycinamide + ADP + phosphate + H(+). It functions in the pathway purine metabolism; IMP biosynthesis via de novo pathway; N(1)-(5-phospho-D-ribosyl)glycinamide from 5-phospho-alpha-D-ribose 1-diphosphate: step 2/2. The sequence is that of Phosphoribosylamine--glycine ligase from Vibrio vulnificus (strain CMCP6).